We begin with the raw amino-acid sequence, 317 residues long: Regulator of microtubule dynamics protein 1 (317 aa).

Position 168 is an N6-succinyllysine (K168). TPR repeat units lie at residues 171–207 (AICI…NPKD) and 225–261 (PWYQ…DPNF).

This sequence belongs to the RMDN family. Interacts with microtubules.

It is found in the cytoplasm. The protein resides in the cytoskeleton. Its subcellular location is the spindle. It localises to the spindle pole. The protein is Regulator of microtubule dynamics protein 1 (RMDN1) of Bos taurus (Bovine).